Here is a 418-residue protein sequence, read N- to C-terminus: UDP-N-acetylglucosamine 1-carboxyvinyltransferase (418 aa).

Position 22–23 (22–23) interacts with phosphoenolpyruvate; the sequence is KN. Arg92 contributes to the UDP-N-acetyl-alpha-D-glucosamine binding site. The Proton donor role is filled by Cys116. Position 116 is a 2-(S-cysteinyl)pyruvic acid O-phosphothioketal (Cys116). UDP-N-acetyl-alpha-D-glucosamine is bound by residues 121–125, Asp305, and Leu327; that span reads RPIDL.

It belongs to the EPSP synthase family. MurA subfamily.

It is found in the cytoplasm. The enzyme catalyses phosphoenolpyruvate + UDP-N-acetyl-alpha-D-glucosamine = UDP-N-acetyl-3-O-(1-carboxyvinyl)-alpha-D-glucosamine + phosphate. The protein operates within cell wall biogenesis; peptidoglycan biosynthesis. In terms of biological role, cell wall formation. Adds enolpyruvyl to UDP-N-acetylglucosamine. In Campylobacter jejuni subsp. doylei (strain ATCC BAA-1458 / RM4099 / 269.97), this protein is UDP-N-acetylglucosamine 1-carboxyvinyltransferase.